The sequence spans 377 residues: DNA-directed RNA polymerase subunit alpha (377 aa).

The segment at 1 to 259 is alpha N-terminal domain (alpha-NTD); it reads MSDSSHNLLY…KHFSVFEKMD (259 aa). The segment at 279–377 is alpha C-terminal domain (alpha-CTD); sequence ILHKLVLGIN…KIRSSKNTKG (99 aa).

It belongs to the RNA polymerase alpha chain family. In terms of assembly, homodimer. The RNAP catalytic core consists of 2 alpha, 1 beta, 1 beta' and 1 omega subunit. When a sigma factor is associated with the core the holoenzyme is formed, which can initiate transcription.

It catalyses the reaction RNA(n) + a ribonucleoside 5'-triphosphate = RNA(n+1) + diphosphate. Its function is as follows. DNA-dependent RNA polymerase catalyzes the transcription of DNA into RNA using the four ribonucleoside triphosphates as substrates. This is DNA-directed RNA polymerase subunit alpha from Chlamydia trachomatis serovar L2 (strain ATCC VR-902B / DSM 19102 / 434/Bu).